The following is a 126-amino-acid chain: Nascent polypeptide-associated complex protein (126 aa).

The 68-residue stretch at 10 to 77 (PRMMKQMQKM…AKKVAKAEEK (68 aa)) folds into the NAC-A/B domain.

This sequence belongs to the NAC-alpha family. Homodimer. Interacts with the ribosome. Binds ribosomal RNA.

Its function is as follows. Contacts the emerging nascent chain on the ribosome. The protein is Nascent polypeptide-associated complex protein of Methanococcus maripaludis (strain C5 / ATCC BAA-1333).